A 221-amino-acid chain; its full sequence is Endonuclease V (221 aa).

Residues Asp44 and Asp112 each contribute to the Mg(2+) site.

Belongs to the endonuclease V family. The cofactor is Mg(2+).

The protein localises to the cytoplasm. It catalyses the reaction Endonucleolytic cleavage at apurinic or apyrimidinic sites to products with a 5'-phosphate.. DNA repair enzyme involved in the repair of deaminated bases. Selectively cleaves double-stranded DNA at the second phosphodiester bond 3' to a deoxyinosine leaving behind the intact lesion on the nicked DNA. This is Endonuclease V from Nostoc sp. (strain PCC 7120 / SAG 25.82 / UTEX 2576).